The primary structure comprises 444 residues: UDP-N-acetylmuramate--L-alanine ligase (444 aa).

111–117 serves as a coordination point for ATP; that stretch reads GAHGKTS.

It belongs to the MurCDEF family.

It is found in the cytoplasm. The enzyme catalyses UDP-N-acetyl-alpha-D-muramate + L-alanine + ATP = UDP-N-acetyl-alpha-D-muramoyl-L-alanine + ADP + phosphate + H(+). It participates in cell wall biogenesis; peptidoglycan biosynthesis. Functionally, cell wall formation. The polypeptide is UDP-N-acetylmuramate--L-alanine ligase (Leuconostoc mesenteroides subsp. mesenteroides (strain ATCC 8293 / DSM 20343 / BCRC 11652 / CCM 1803 / JCM 6124 / NCDO 523 / NBRC 100496 / NCIMB 8023 / NCTC 12954 / NRRL B-1118 / 37Y)).